A 496-amino-acid chain; its full sequence is MFLKKLIEAKKAYTFDDVLLVPNASWVEPKDTDVSTDLAGLKLNIPIVSAAMDTVTEKEMAIALARLGGLGVIHRNMSIEEQVHQVQAVKKADEVVIKDVITVSPDDTVGEAINVMETYSISGLPVVDNEDKLVGIITHRDVKAIEDKTKKVKDVMTKDVVCAKEDVEEEEALELMYANRVERLPIVDDENRLIGIITLRDILKRRKYPQAARDKKGRLLVAAACGPHDFERAKALIEAEVDAIAIDCAHAHNMRVVENVKKFKEMLEGTDIKLIVGNIATKEAAEDLIKAGADVLKVGIGPGSICTTRVVAGVGVPQLTAVAEVADVAKEHNVPIIADGGIRYSGDIAKAIAAGADAVMLGSLLAGTDEAPGQLMVINGRKYKQYRGMGSLGAMTGGVGAGADRYFQAPAKSHMKHVKLVPEGVEGAVPYKGPVSEVVFQLIGGLRASMGYCGAKNLKEMQEKARFVIITPSGQVESHPHDIIITNEAPNYPLGK.

CBS domains follow at residues 96–152 and 156–212; these read VIKD…TKKV and MTKD…PQAA. NAD(+)-binding positions include D247 and 299–301; that span reads GIG. K(+) is bound by residues G301 and G303. Position 304 (S304) interacts with IMP. C306 contacts K(+). Residue C306 is the Thioimidate intermediate of the active site. IMP is bound by residues 339–341, 362–363, and 386–390; these read DGG, GS, and YRGMG. Residue R405 is the Proton acceptor of the active site. E423 serves as a coordination point for IMP. K(+) is bound by residues E477, S478, and H479.

It belongs to the IMPDH/GMPR family. In terms of assembly, homotetramer. K(+) serves as cofactor.

It carries out the reaction IMP + NAD(+) + H2O = XMP + NADH + H(+). It participates in purine metabolism; XMP biosynthesis via de novo pathway; XMP from IMP: step 1/1. Mycophenolic acid (MPA) is a non-competitive inhibitor that prevents formation of the closed enzyme conformation by binding to the same site as the amobile flap. In contrast, mizoribine monophosphate (MZP) is a competitive inhibitor that induces the closed conformation. MPA is a potent inhibitor of mammalian IMPDHs but a poor inhibitor of the bacterial enzymes. MZP is a more potent inhibitor of bacterial IMPDH. Functionally, catalyzes the conversion of inosine 5'-phosphate (IMP) to xanthosine 5'-phosphate (XMP), the first committed and rate-limiting step in the de novo synthesis of guanine nucleotides, and therefore plays an important role in the regulation of cell growth. The chain is Inosine-5'-monophosphate dehydrogenase from Methanocaldococcus jannaschii (strain ATCC 43067 / DSM 2661 / JAL-1 / JCM 10045 / NBRC 100440) (Methanococcus jannaschii).